The following is a 345-amino-acid chain: Hydroxymethylglutaryl-CoA synthase (345 aa).

D28 is a binding site for (3S)-3-hydroxy-3-methylglutaryl-CoA. The active-site Proton donor/acceptor is E80. (3S)-3-hydroxy-3-methylglutaryl-CoA contacts are provided by C112 and T153. C112 (acyl-thioester intermediate) is an active-site residue. A CoA-binding site is contributed by R199. (3S)-3-hydroxy-3-methylglutaryl-CoA is bound by residues T201 and H234. Residue H234 is the Proton donor/acceptor of the active site. A CoA-binding site is contributed by K239. Positions 243, 266, and 296 each coordinate (3S)-3-hydroxy-3-methylglutaryl-CoA.

It belongs to the thiolase-like superfamily. Archaeal HMG-CoA synthase family. As to quaternary structure, interacts with acetoacetyl-CoA thiolase that catalyzes the precedent step in the pathway and with a DUF35 protein. The acetoacetyl-CoA thiolase/HMG-CoA synthase complex channels the intermediate via a fused CoA-binding site, which allows for efficient coupling of the endergonic thiolase reaction with the exergonic HMGCS reaction.

The catalysed reaction is acetoacetyl-CoA + acetyl-CoA + H2O = (3S)-3-hydroxy-3-methylglutaryl-CoA + CoA + H(+). Its pathway is metabolic intermediate biosynthesis; (R)-mevalonate biosynthesis; (R)-mevalonate from acetyl-CoA: step 2/3. In terms of biological role, catalyzes the condensation of acetyl-CoA with acetoacetyl-CoA to form 3-hydroxy-3-methylglutaryl-CoA (HMG-CoA). Functions in the mevalonate (MVA) pathway leading to isopentenyl diphosphate (IPP), a key precursor for the biosynthesis of isoprenoid compounds that are building blocks of archaeal membrane lipids. In Methanobrevibacter smithii (strain ATCC 35061 / DSM 861 / OCM 144 / PS), this protein is Hydroxymethylglutaryl-CoA synthase.